The chain runs to 1365 residues: Histone-lysine N-methyltransferase NSD2 (1365 aa).

A phosphothreonine mark is found at Thr-110 and Thr-114. Position 121 is a phosphoserine (Ser-121). The tract at residues 149–169 (ADVSQSEENEQKSDNKTRRNR) is disordered. Ser-172 carries the phosphoserine modification. The 65-residue stretch at 222–286 (VGDLVWSKVS…FEKSLVAFEG (65 aa)) folds into the PWWP 1 domain. Disordered regions lie at residues 373 to 455 (MVDS…RKGD), 513 to 567 (QSEE…DKTA), and 594 to 658 (CKPL…SKKS). Ser-376 carries the post-translational modification Phosphoserine. Thr-422 bears the Phosphothreonine mark. The segment at residues 453-521 (KGDSAAQFLV…AQSEEDSGNG (69 aa)) is a DNA-binding region (HMG box). Residues 552-567 (DKHSLRKRETITDKTA) are compositionally biased toward basic and acidic residues. Positions 603 to 623 (ASATASSALGFNKSSSPSASL) are enriched in polar residues. Acidic residues predominate over residues 632-648 (PGDEPSESPYESADETQ). 3 PHD-type zinc fingers span residues 667–713 (EYVC…CASG), 714–770 (IHSC…CHAS), and 831–875 (VSWC…CRAG). The region spanning 880-942 (FQDIIWVKLG…QARVFPYMEG (63 aa)) is the PWWP 2 domain. An AWS domain is found at 1011–1061 (SEIPKCNCKPTDENPCGSDSECLNRMLMFECHPQVCPAGEYCQNQCFTKRQ). Zn(2+)-binding residues include Cys-1016, Cys-1018, Cys-1026, Cys-1032, Cys-1041, Cys-1046, and Cys-1052. The SET domain maps to 1063–1180 (PETKIIKTDG…AGTELTFNYN (118 aa)). S-adenosyl-L-methionine contacts are provided by residues Trp-1075, 1115 to 1118 (THFY), and 1141 to 1142 (NH). Cys-1144 is a binding site for Zn(2+). Asn-1186 lines the S-adenosyl-L-methionine pocket. Residues 1187–1203 (EKTVCRCGASNCSGFLG) enclose the Post-SET domain. Cys-1191 is a binding site for Zn(2+). Arg-1192 provides a ligand contact to S-adenosyl-L-methionine. Residues Cys-1193 and Cys-1198 each contribute to the Zn(2+) site. The segment at 1206–1232 (PKTSASLSSEEKGKKAKKKTRRRRAKG) is disordered. A compositionally biased stretch (basic residues) spans 1219 to 1230 (KKAKKKTRRRRA). The segment at 1239–1286 (EDECFRCGDGGQLVLCDRKFCTKAYHLSCLGLGKRPFGKWECPWHHCD) adopts a PHD-type 4; atypical zinc-finger fold. Positions 1329 to 1365 (RADSSSSTKTEKPFPESLKSKGKRKKRRCWRRVTDGK) are disordered. A compositionally biased stretch (basic residues) spans 1348-1359 (SKGKRKKRRCWR).

Belongs to the class V-like SAM-binding methyltransferase superfamily. Histone-lysine methyltransferase family. SET2 subfamily. In terms of assembly, interacts with HDAC1. Interacts (via PHD-type zinc fingers 1, 2 and 3) with SALL1. Interacts (via PHD-type 1, 2 and 3) with SALL4. Interacts with NANOG. Interacts with OGT. Interacts (via HMG box) with NKX2-5. As to expression, during B-cell development, expressed in early B2 cell progenitors (pre- and pro-B cells) with a decrease in expression at later stages.

It localises to the nucleus. It is found in the chromosome. The catalysed reaction is L-lysyl(36)-[histone H3] + S-adenosyl-L-methionine = N(6)-methyl-L-lysyl(36)-[histone H3] + S-adenosyl-L-homocysteine + H(+). The enzyme catalyses L-lysyl(36)-[histone H3] + 2 S-adenosyl-L-methionine = N(6),N(6)-dimethyl-L-lysyl(36)-[histone H3] + 2 S-adenosyl-L-homocysteine + 2 H(+). Its function is as follows. Histone methyltransferase which specifically dimethylates nucleosomal histone H3 at 'Lys-36' (H3K36me2). Also monomethylates nucleosomal histone H3 at 'Lys-36' (H3K36me) in vitro. Does not trimethylate nucleosomal histone H3 at 'Lys-36' (H3K36me3). However, specifically trimethylates histone H3 at 'Lys-36' (H3K36me3) at euchromatic regions in embryonic stem (ES) cells. By methylating histone H3 at 'Lys-36', involved in the regulation of gene transcription during various biological processes. In ES cells, associates with developmental transcription factors such as SALL1 and represses inappropriate gene transcription mediated by histone deacetylation. During heart development, associates with transcription factor NKX2-5 to repress transcription of NKX2-5 target genes. Plays an essential role in adipogenesis, by regulating expression of genes involved in pre-adipocyte differentiation. During T-cell receptor (TCR) and CD28-mediated T-cell activation, promotes the transcription of transcription factor BCL6 which is required for follicular helper T (Tfh) cell differentiation. During B-cell development, required for the generation of the B1 lineage. During B2 cell activation, may contribute to the control of isotype class switch recombination (CRS), splenic germinal center formation, and the humoral immune response. Plays a role in class switch recombination of the immunoglobulin heavy chain (IgH) locus during B-cell activation. By regulating the methylation of histone H3 at 'Lys-36' and histone H4 at 'Lys-20' at the IgH locus, involved in TP53BP1 recruitment to the IgH switch region and promotes the transcription of IgA. Histone methyltransferase which specifically dimethylates nucleosomal histone H3 at 'Lys-36' (H3K36me2). Mono-, di- and tri-methylates histone H3 at 'Lys-27' (H3K27me, H3K27me2, H3K27me3). Methylation of histone H3 at 'Lys-27' is controversial. May act as a transcription regulator that binds DNA and suppresses IL5 transcription through HDAC recruitment. In Mus musculus (Mouse), this protein is Histone-lysine N-methyltransferase NSD2 (Nsd2).